A 270-amino-acid chain; its full sequence is Interleukin-33 (270 aa).

The tract at residues 1 to 65 is homeodomain-like HTH domain; that stretch reads MKPKMKYSTN…EACYFRRETT (65 aa). Residues 1 to 94 constitute a propeptide that is removed on maturation; sequence MKPKMKYSTN…CQQQSTVESF (94 aa). The segment at 64-111 is interaction with RELA; sequence TTKRPSLKTDRKHKRHLVLAACQQQSTVESFAFGISGVQKYTRALHDS.

It belongs to the IL-1 family. Highly divergent. As to quaternary structure, forms a 1:1:1 heterotrimeric complex with its primary high-affinity receptor IL1RL1 and the coreceptor IL1RAP. Interacts with cargo receptor TMED10; the interaction mediates the translocation from the cytoplasm into the ERGIC (endoplasmic reticulum-Golgi intermediate compartment) and thereby secretion. In terms of processing, the full-length protein can be released from cells and is able to signal via the IL1RL1/ST2 receptor. However, proteolytic processing by CELA1, CSTG/cathepsin G and ELANE/neutrophil elastase produces C-terminal peptides that are more active than the unprocessed full-length protein. May also be proteolytically processed by calpains. Proteolytic cleavage mediated by apoptotic caspases including CASP3 and CASP7 results in IL33 inactivation. In vitro proteolytic cleavage by CASP1 was reported but could not be confirmed in vivo suggesting that IL33 is probably not a direct substrate for that caspase.

The protein localises to the nucleus. The protein resides in the chromosome. Its subcellular location is the cytoplasm. It is found in the cytoplasmic vesicle. It localises to the secretory vesicle. The protein localises to the secreted. Its function is as follows. Cytokine that binds to and signals through the IL1RL1/ST2 receptor which in turn activates NF-kappa-B and MAPK signaling pathways in target cells. Involved in the maturation of Th2 cells inducing the secretion of T-helper type 2-associated cytokines. Also involved in activation of mast cells, basophils, eosinophils and natural killer cells. Acts as a chemoattractant for Th2 cells, and may function as an 'alarmin', that amplifies immune responses during tissue injury. Induces rapid UCP2-dependent mitochondrial rewiring that attenuates the generation of reactive oxygen species and preserves the integrity of Krebs cycle required for persistent production of itaconate and subsequent GATA3-dependent differentiation of inflammation-resolving alternatively activated macrophages. Functionally, in quiescent endothelia the uncleaved form is constitutively and abundantly expressed, and acts as a chromatin-associated nuclear factor with transcriptional repressor properties, it may sequester nuclear NF-kappaB/RELA, lowering expression of its targets. This form is rapidely lost upon angiogenic or pro-inflammatory activation. The protein is Interleukin-33 (IL33) of Pongo abelii (Sumatran orangutan).